The following is a 79-amino-acid chain: MNRMGFFLMLTAAVLLTSLVCTEATPADESKVKRARWSRIEGSRLFRHRLPKSSQSTCPYCQISCCPPAYCQPSGCRGP.

The signal sequence occupies residues Met-1 to Ala-24. The propeptide occupies Thr-25 to Lys-52. Cystine bridges form between Cys-58-Cys-66, Cys-61-Cys-71, and Cys-65-Cys-76. 4-hydroxyproline occurs at positions 59, 67, 68, and 73.

As to expression, expressed by the venom duct.

It localises to the secreted. This is Conotoxin ba-2281 from Conus bayani (Bayan's cone).